A 583-amino-acid chain; its full sequence is Inactive tyrosine-protein kinase RYK (583 aa).

Positions 1-18 are cleaved as a signal peptide; the sequence is MILRYLIFFAQLWALCLA. Residues 19 to 173 lie on the Extracellular side of the membrane; the sequence is NVNMFISKEE…EVDDTDSIDK (155 aa). One can recognise a WIF domain in the interval 22–147; it reads MFISKEEMNR…KVKLRQEKIC (126 aa). N-linked (GlcNAc...) asparagine glycans are attached at residues Asn30 and Asn46. Cys113 and Cys147 are disulfide-bonded. The chain crosses the membrane as a helical span at residues 174 to 194; sequence AFFVIICIAAAFLLIVAATLI. The Cytoplasmic segment spans residues 195-583; that stretch reads CYFKRSKKED…DFNIQLSQYI (389 aa). The 303-residue stretch at 281-583 folds into the Protein kinase domain; that stretch reads FQSLPLDMEG…DFNIQLSQYI (303 aa). Residues 287–295 and Lys327 each bind ATP; that span reads DMEGTFGEV.

It belongs to the protein kinase superfamily. Tyr protein kinase family.

It localises to the cell membrane. It is found in the basolateral cell membrane. Functionally, has no detectable kinase activity in vitro and is unlikely to function as a tyrosine kinase in vivo. Receptor which may act as a receptor for Wnt ligand mom-2. Plays a role in controlling P7.p vulva precursor cell lineage orientation during vulva development. Regulates pop-1 asymmetric distribution in P7.p and its daughter cells. Plays a role in the migration of ALM neurons during embryogenesis. In Caenorhabditis elegans, this protein is Inactive tyrosine-protein kinase RYK.